The primary structure comprises 157 residues: Transcription elongation factor GreA (157 aa).

It belongs to the GreA/GreB family.

Necessary for efficient RNA polymerase transcription elongation past template-encoded arresting sites. The arresting sites in DNA have the property of trapping a certain fraction of elongating RNA polymerases that pass through, resulting in locked ternary complexes. Cleavage of the nascent transcript by cleavage factors such as GreA or GreB allows the resumption of elongation from the new 3'terminus. GreA releases sequences of 2 to 3 nucleotides. In Caulobacter sp. (strain K31), this protein is Transcription elongation factor GreA.